The chain runs to 718 residues: MDKVQQQADLFGKTISPFVASQPTNVGGFTDQKIIGGSETTQPPATSPPSPPSPDTQTSPPPATAAQPPPNQPPNTTPPPTPPSSPPPSITPPPSPPQPQPPPQSTPTGDSPVVIPFPKPQLPPPSLFPPPSLVNQLPDPRPNDNNILEPINNPISLPSPPSTPFSPPSQENSGSQGSPPLSSLLPPMLPLNPNSPGNPLQPLDSPLGGESNRVPSSSSSPSPPSLSGSNNHSGGSNRHNANSNGDGGTSQQSNESNYTEKTVIGIGIAGVLVILFIAGVFFVRRKQKKGSSSPRSNQYLPPANVSVNTEGFIHYRQKPGNGNSSAQNSSPDTNSLGNPKHGRGTPDSAVIGTSKIHFTYEELSQITEGFCKSFVVGEGGFGCVYKGILFEGKPVAIKQLKSVSAEGYREFKAEVEIISRVHHRHLVSLVGYCISEQHRFLIYEFVPNNTLDYHLHGKNLPVLEWSRRVRIAIGAAKGLAYLHEDCHPKIIHRDIKSSNILLDDEFEAQVADFGLARLNDTAQSHISTRVMGTFGYLAPEYASSGKLTDRSDVFSFGVVLLELITGRKPVDTSQPLGEESLVEWARPRLIEAIEKGDISEVVDPRLENDYVESEVYKMIETAASCVRHSALKRPRMVQVVRALDTRDDLSDLTNGVKVGQSRVYDSGQYSNEIRIFRRASEDSSDLGTNTGYYPSQDYATSHEYESESRAFNTSHRNH.

The disordered stretch occupies residues 1–256 (MDKVQQQADL…GGTSQQSNES (256 aa)). At 1 to 262 (MDKVQQQADL…SNESNYTEKT (262 aa)) the chain is on the extracellular side. Composition is skewed to pro residues over residues 45-105 (ATSP…PPQS), 115-132 (IPFP…PPPS), and 157-167 (LPSPPSTPFSP). 2 stretches are compositionally biased toward low complexity: residues 168–203 (PSQE…LQPL) and 211–244 (SNRV…ANSN). 3 N-linked (GlcNAc...) asparagine glycosylation sites follow: Asn-231, Asn-254, and Asn-257. A helical transmembrane segment spans residues 263 to 283 (VIGIGIAGVLVILFIAGVFFV). The Cytoplasmic segment spans residues 284 to 718 (RRKQKKGSSS…RAFNTSHRNH (435 aa)). Residues 314–348 (HYRQKPGNGNSSAQNSSPDTNSLGNPKHGRGTPDS) form a disordered region. Residues 320 to 337 (GNGNSSAQNSSPDTNSLG) are compositionally biased toward polar residues. A Phosphothreonine modification is found at Thr-359. Positions 370–649 (FCKSFVVGEG…VRALDTRDDL (280 aa)) constitute a Protein kinase domain. ATP contacts are provided by residues 376–384 (VGEGGFGCV) and Lys-398. At Tyr-443 the chain carries Phosphotyrosine. Asp-494 acts as the Proton acceptor in catalysis. Ser-498 and Ser-527 each carry phosphoserine. Thr-528 and Thr-533 each carry phosphothreonine. Tyr-541 carries the post-translational modification Phosphotyrosine. A disordered region spans residues 683–718 (SSDLGTNTGYYPSQDYATSHEYESESRAFNTSHRNH). Composition is skewed to polar residues over residues 685-699 (DLGT…QDYA) and 709-718 (RAFNTSHRNH).

The protein belongs to the protein kinase superfamily. Ser/Thr protein kinase family. In terms of tissue distribution, mostly expressed in flower buds.

The protein resides in the cell membrane. It carries out the reaction L-seryl-[protein] + ATP = O-phospho-L-seryl-[protein] + ADP + H(+). The catalysed reaction is L-threonyl-[protein] + ATP = O-phospho-L-threonyl-[protein] + ADP + H(+). This chain is Putative proline-rich receptor-like protein kinase PERK11 (PERK11), found in Arabidopsis thaliana (Mouse-ear cress).